Here is a 305-residue protein sequence, read N- to C-terminus: 4-diphosphocytidyl-2-C-methyl-D-erythritol kinase (305 aa).

Lysine 10 is an active-site residue. 95 to 105 (PVTAGLGGGSS) contributes to the ATP binding site. The active site involves aspartate 136. Residues 286 to 305 (PGVTPWRSPRSASSPSTKRS) form a disordered region. Residues 290–305 (PWRSPRSASSPSTKRS) are compositionally biased toward low complexity.

The protein belongs to the GHMP kinase family. IspE subfamily.

It catalyses the reaction 4-CDP-2-C-methyl-D-erythritol + ATP = 4-CDP-2-C-methyl-D-erythritol 2-phosphate + ADP + H(+). It participates in isoprenoid biosynthesis; isopentenyl diphosphate biosynthesis via DXP pathway; isopentenyl diphosphate from 1-deoxy-D-xylulose 5-phosphate: step 3/6. Catalyzes the phosphorylation of the position 2 hydroxy group of 4-diphosphocytidyl-2C-methyl-D-erythritol. This Anaeromyxobacter sp. (strain Fw109-5) protein is 4-diphosphocytidyl-2-C-methyl-D-erythritol kinase.